Consider the following 81-residue polypeptide: MNVEHEISLLVEEIRRLGTKNADGQVSVKFGVLFADEKCANLFEALVGTLKAAKRRKIVTYQGELLLQGVHDNVDIVLLQD.

This sequence belongs to the costars family.

In Coturnix coturnix (Common quail), this protein is Costars family protein ABRACL.